Reading from the N-terminus, the 252-residue chain is Thiazole synthase (252 aa).

The active-site Schiff-base intermediate with DXP is Lys98. Residues Gly159, Ala185 to Gly186, and Ala207 to Thr208 each bind 1-deoxy-D-xylulose 5-phosphate.

Belongs to the ThiG family. In terms of assembly, homotetramer. Forms heterodimers with either ThiH or ThiS.

The protein resides in the cytoplasm. It catalyses the reaction [ThiS sulfur-carrier protein]-C-terminal-Gly-aminoethanethioate + 2-iminoacetate + 1-deoxy-D-xylulose 5-phosphate = [ThiS sulfur-carrier protein]-C-terminal Gly-Gly + 2-[(2R,5Z)-2-carboxy-4-methylthiazol-5(2H)-ylidene]ethyl phosphate + 2 H2O + H(+). It participates in cofactor biosynthesis; thiamine diphosphate biosynthesis. Functionally, catalyzes the rearrangement of 1-deoxy-D-xylulose 5-phosphate (DXP) to produce the thiazole phosphate moiety of thiamine. Sulfur is provided by the thiocarboxylate moiety of the carrier protein ThiS. In vitro, sulfur can be provided by H(2)S. This chain is Thiazole synthase, found in Mycobacterium avium (strain 104).